The primary structure comprises 259 residues: Enolase-phosphatase E1 (259 aa).

Mg(2+)-binding residues include aspartate 16 and glutamate 18. Residues 151-152 and lysine 185 each bind substrate; that span reads SS. Residue aspartate 210 coordinates Mg(2+).

This sequence belongs to the HAD-like hydrolase superfamily. MasA/MtnC family. In terms of assembly, monomer. Requires Mg(2+) as cofactor.

The protein localises to the cytoplasm. It is found in the nucleus. The enzyme catalyses 5-methylsulfanyl-2,3-dioxopentyl phosphate + H2O = 1,2-dihydroxy-5-(methylsulfanyl)pent-1-en-3-one + phosphate. Its pathway is amino-acid biosynthesis; L-methionine biosynthesis via salvage pathway; L-methionine from S-methyl-5-thio-alpha-D-ribose 1-phosphate: step 3/6. It functions in the pathway amino-acid biosynthesis; L-methionine biosynthesis via salvage pathway; L-methionine from S-methyl-5-thio-alpha-D-ribose 1-phosphate: step 4/6. In terms of biological role, bifunctional enzyme that catalyzes the enolization of 2,3-diketo-5-methylthiopentyl-1-phosphate (DK-MTP-1-P) into the intermediate 2-hydroxy-3-keto-5-methylthiopentenyl-1-phosphate (HK-MTPenyl-1-P), which is then dephosphorylated to form the acireductone 1,2-dihydroxy-3-keto-5-methylthiopentene (DHK-MTPene). This chain is Enolase-phosphatase E1 (enoph1), found in Xenopus tropicalis (Western clawed frog).